We begin with the raw amino-acid sequence, 78 residues long: Large ribosomal subunit protein bL28 (78 aa).

The protein belongs to the bacterial ribosomal protein bL28 family.

The polypeptide is Large ribosomal subunit protein bL28 (Hydrogenovibrio crunogenus (strain DSM 25203 / XCL-2) (Thiomicrospira crunogena)).